We begin with the raw amino-acid sequence, 45 residues long: GHVPCGKDGRKCGYHADCCNCCLSGICKPSTSWTGCSTSTVQLTR.

4 disulfide bridges follow: Cys5–Cys19, Cys12–Cys22, Cys18–Cys27, and Cys21–Cys36. Leu43 bears the D-leucine mark. Position 45 (Arg45) is a propeptide, removed by a carboxypeptidase.

It belongs to the conotoxin I1 superfamily. In terms of tissue distribution, expressed by the venom duct.

The protein localises to the secreted. Its function is as follows. Iota-conotoxins bind to voltage-gated sodium channels (Nav) and act as agonists by shifting the voltage-dependence of activation to more hyperpolarized levels. Produces general excitatory symptoms. This chain is Iota-conotoxin-like R11.10, found in Conus radiatus (Rayed cone).